The primary structure comprises 175 residues: Arginine repressor (175 aa).

The disordered stretch occupies residues 1–23 (MSVSTPERGGAEQGKGPAIARTR).

The protein belongs to the ArgR family.

Its subcellular location is the cytoplasm. It participates in amino-acid biosynthesis; L-arginine biosynthesis [regulation]. Functionally, regulates arginine biosynthesis genes. In Nocardia farcinica (strain IFM 10152), this protein is Arginine repressor.